Consider the following 338-residue polypeptide: DNA-directed RNA polymerase subunit alpha (338 aa).

An alpha N-terminal domain (alpha-NTD) region spans residues 1-234; the sequence is MIERNWNELI…DQLQIFITFE (234 aa). Residues 250 to 338 are alpha C-terminal domain (alpha-CTD); sequence FNPALLKKVD…DLAKKFEDQI (89 aa).

It belongs to the RNA polymerase alpha chain family. As to quaternary structure, homodimer. The RNAP catalytic core consists of 2 alpha, 1 beta, 1 beta' and 1 omega subunit. When a sigma factor is associated with the core the holoenzyme is formed, which can initiate transcription.

The enzyme catalyses RNA(n) + a ribonucleoside 5'-triphosphate = RNA(n+1) + diphosphate. Its function is as follows. DNA-dependent RNA polymerase catalyzes the transcription of DNA into RNA using the four ribonucleoside triphosphates as substrates. In Caulobacter vibrioides (strain ATCC 19089 / CIP 103742 / CB 15) (Caulobacter crescentus), this protein is DNA-directed RNA polymerase subunit alpha.